The primary structure comprises 779 residues: Anion/proton exchange transporter GEF1 (779 aa).

Residues 1–75 (MPTTYVPINQ…REVIWDRAKT (75 aa)) lie on the Cytoplasmic side of the membrane. The chain crosses the membrane as a helical span at residues 76–96 (FITLSSTAIVIGCIAGFLQVF). Residues 97 to 154 (TETLVNWKTGHCQRNWLLNKSFCCNGVVNEVTSTSNLLLKRQEFECEAQGLWIAWKGH) are Lumenal-facing. Residues 155–175 (VSPFIIFMLLSVLFALISTLL) traverse the membrane as a helical segment. Residues 176-177 (VK) are Cytoplasmic-facing. The chain crosses the membrane as a helical span at residues 178–198 (YVAPMATGSGISEIKVWVSGF). The Lumenal portion of the chain corresponds to 199 to 203 (EYNKE). The chain crosses the membrane as a helical span at residues 204-224 (FLGFLTLVIKSVALPLAISSG). Topologically, residues 225–264 (LSVGKEGPSVHYATCCGYLLTKWLLRDTLTYSSQYEYITA) are cytoplasmic. A helical transmembrane segment spans residues 265-285 (ASGAGVAVAFGAPIGGVLFGL). Over 286 to 296 (EEIASANRFNS) the chain is Lumenal. The helical transmembrane segment at 297 to 319 (STLWKSYYVALVAITTLKYIDPF) threads the bilayer. Residues 320 to 336 (RNGRVILFNVTYDRDWK) are Cytoplasmic-facing. Residues 337 to 357 (VQEIPIFIALGIFGGLYGKYI) form a helical membrane-spanning segment. Residues 358-369 (SKWNINFIHFRK) lie on the Lumenal side of the membrane. The chain crosses the membrane as a helical span at residues 370–390 (MYLSSWPVQEVLFLATLTALI). Residues 391–436 (SYFNEFLKLDMTESMGILFHECVKNDNTSTFSHRLCQLDENTHAFE) lie on the Cytoplasmic side of the membrane. A helical transmembrane segment spans residues 437–457 (FLKIFTSLCFATVIRALLVVV). Residues 458 to 465 (SYGARVPA) are Lumenal-facing. The chain crosses the membrane as a helical span at residues 466–486 (GIFVPSMAVGATFGRAVSLLV). Residues 487–500 (ERFISGPSVITPGA) are Cytoplasmic-facing. Residues 501 to 523 (YAFLGAAATLSGITNLTLTVVVI) form a helical membrane-spanning segment. Residues 524–529 (MFELTG) lie on the Lumenal side of the membrane. The helical transmembrane segment at 530 to 552 (AFMYIIPLMIVVAITRIILSTSG) threads the bilayer. Residues 553-779 (ISGGIADQMI…FTTNRNGNVI (227 aa)) are Cytoplasmic-facing. CBS domains follow at residues 591–659 (MSSK…VNST) and 688–744 (MNES…YREV).

It belongs to the chloride channel (TC 2.A.49) family. Homodimer. Interacts with GET3. In terms of processing, proteolytically processed in the secretory pathway by protease KEX2 within the first extracellular loop. However, both the N- and C-terminal products of the cleavage reaction are required for assembly of a functional channel.

The protein localises to the golgi apparatus membrane. Its subcellular location is the endosome membrane. The protein resides in the prevacuolar compartment membrane. In terms of biological role, anion/proton exchange transporter involved in iron and copper cation homeostasis. Involved in intracellular iron metabolism during growth on fermentable and non fermentable carbon sources. Required for proper copper-loading and maturation of multicopper oxidase FET3. Important for adjusting intracellular compartment pH to more alkaline pH under iron limitation. May also transport chloride ions through the plasma membrane. In Saccharomyces cerevisiae (strain ATCC 204508 / S288c) (Baker's yeast), this protein is Anion/proton exchange transporter GEF1 (GEF1).